The chain runs to 436 residues: Tol-Pal system protein TolB (436 aa).

The first 28 residues, methionine 1–alanine 28, serve as a signal peptide directing secretion.

The protein belongs to the TolB family. The Tol-Pal system is composed of five core proteins: the inner membrane proteins TolA, TolQ and TolR, the periplasmic protein TolB and the outer membrane protein Pal. They form a network linking the inner and outer membranes and the peptidoglycan layer.

Its subcellular location is the periplasm. Functionally, part of the Tol-Pal system, which plays a role in outer membrane invagination during cell division and is important for maintaining outer membrane integrity. This is Tol-Pal system protein TolB from Sinorhizobium medicae (strain WSM419) (Ensifer medicae).